Here is a 294-residue protein sequence, read N- to C-terminus: Phosphoribosylaminoimidazole-succinocarboxamide synthase (294 aa).

Belongs to the SAICAR synthetase family.

The catalysed reaction is 5-amino-1-(5-phospho-D-ribosyl)imidazole-4-carboxylate + L-aspartate + ATP = (2S)-2-[5-amino-1-(5-phospho-beta-D-ribosyl)imidazole-4-carboxamido]succinate + ADP + phosphate + 2 H(+). It functions in the pathway purine metabolism; IMP biosynthesis via de novo pathway; 5-amino-1-(5-phospho-D-ribosyl)imidazole-4-carboxamide from 5-amino-1-(5-phospho-D-ribosyl)imidazole-4-carboxylate: step 1/2. The protein is Phosphoribosylaminoimidazole-succinocarboxamide synthase of Rhodococcus opacus (strain B4).